We begin with the raw amino-acid sequence, 425 residues long: G protein-activated inward rectifier potassium channel 2 (425 aa).

Residues 1–91 (MTMAKLTESM…IFTTLVDLKW (91 aa)) lie on the Cytoplasmic side of the membrane. 2 positions are modified to phosphoserine: Ser-18 and Ser-25. Residues 92–116 (RFNLLIFVMVYTVTWLFFGMIWWLI) traverse the membrane as a helical segment. Residues 117–140 (AYIRGDMDHIEDPSWTPCVTNLNG) lie on the Extracellular side of the membrane. The helical; Pore-forming intramembrane region spans 141–152 (FVSAFLFSIETE). Positions 153-159 (TTIGYGY) form an intramembrane region, pore-forming. The short motif at 154–159 (TIGYGY) is the Selectivity filter element. Over 160–168 (RVITDKCPE) the chain is Extracellular. A helical membrane pass occupies residues 169-190 (GIILLLIQSVLGSIVNAFMVGC). The Cytoplasmic segment spans residues 191 to 425 (MFVKISQPKK…VANLENESKV (235 aa)). Residues 392–425 (NQHAELETEEEEKNPEELTERNGDVANLENESKV) are disordered. The PDZ-binding motif lies at 422 to 425 (ESKV).

Belongs to the inward rectifier-type potassium channel (TC 1.A.2.1) family. KCNJ6 subfamily. In terms of assembly, associates with KCNJ3/GIRK1to form a G-protein-activated heteromultimer pore-forming unit. Associates with KCNJ5/GRIK4 to form a G-protein-activated heteromultimer pore-forming unit. The resulting inward current is much larger. Interacts (via PDZ-binding motif) with SNX27 (via PDZ domain); the interaction is required when endocytosed to prevent degradation in lysosomes and promote recycling to the plasma membrane. Associates with KCNJ3/GRIK1 to form a G-protein-activated heteromultimer pore-forming unit. As to quaternary structure, associates with KCNJ3/GRIK1 to form a G-protein-activated heteromultimer pore-forming unit. The resulting inward current is much larger. Expressed in the brain.

Its subcellular location is the membrane. It catalyses the reaction K(+)(in) = K(+)(out). Its activity is regulated as follows. Activated by phosphatidylinositol 4,5 biphosphate (PtdIns(4,5)P2). Functionally, inward rectifier potassium channels are characterized by a greater tendency to allow potassium to flow into the cell rather than out of it. Their voltage dependence is regulated by the concentration of extracellular potassium; as external potassium is raised, the voltage range of the channel opening shifts to more positive voltages. The inward rectification is mainly due to the blockage of outward current by internal magnesium. This potassium channel is controlled by G proteins. Forms a functional channel in association with KCNJ3/GIRK1. Its function is as follows. Inward rectifier potassium channels are characterized by a greater tendency to allow potassium to flow into the cell rather than out of it. Their voltage dependence is regulated by the concentration of extracellular potassium; as external potassium is raised, the voltage range of the channel opening shifts to more positive voltages. The inward rectification is mainly due to the blockage of outward current by internal magnesium. This potassium channel is controlled by G proteins. The sequence is that of G protein-activated inward rectifier potassium channel 2 (Kcnj6) from Mus musculus (Mouse).